The primary structure comprises 276 residues: Rhomboid protease GlpG (276 aa).

The next 6 helical transmembrane spans lie at 94 to 114 (GPVTWVMMIACVVVFIAMQIL), 142 to 162 (ALMHFSLMHILFNLLWWWYLG), 169 to 189 (LGSGKLIVITLISALLSGYVQ), 192 to 212 (FSGPWFGGLSGVVYALMGYVW), 229 to 249 (LIIFALIWIVAGWFDLFGMSM), and 250 to 270 (ANGAHIAGLAVGLAMAFVDSL). Ser-201 functions as the Nucleophile in the catalytic mechanism. Residue His-254 is part of the active site.

Belongs to the peptidase S54 family.

It localises to the cell inner membrane. The catalysed reaction is Cleaves type-1 transmembrane domains using a catalytic dyad composed of serine and histidine that are contributed by different transmembrane domains.. Its function is as follows. Rhomboid-type serine protease that catalyzes intramembrane proteolysis. The sequence is that of Rhomboid protease GlpG from Escherichia coli O157:H7.